Here is a 272-residue protein sequence, read N- to C-terminus: Hydroxyethylthiazole kinase (272 aa).

Substrate is bound at residue methionine 45. ATP-binding residues include arginine 121 and threonine 168. Glycine 195 provides a ligand contact to substrate.

It belongs to the Thz kinase family. As to quaternary structure, homotrimer. Requires Mg(2+) as cofactor.

It carries out the reaction 5-(2-hydroxyethyl)-4-methylthiazole + ATP = 4-methyl-5-(2-phosphooxyethyl)-thiazole + ADP + H(+). It participates in cofactor biosynthesis; thiamine diphosphate biosynthesis; 4-methyl-5-(2-phosphoethyl)-thiazole from 5-(2-hydroxyethyl)-4-methylthiazole: step 1/1. Catalyzes the phosphorylation of the hydroxyl group of 4-methyl-5-beta-hydroxyethylthiazole (THZ). This chain is Hydroxyethylthiazole kinase, found in Bacillus subtilis (strain 168).